Here is a 179-residue protein sequence, read N- to C-terminus: ATP synthase subunit delta (179 aa).

The protein belongs to the ATPase delta chain family. As to quaternary structure, F-type ATPases have 2 components, F(1) - the catalytic core - and F(0) - the membrane proton channel. F(1) has five subunits: alpha(3), beta(3), gamma(1), delta(1), epsilon(1). F(0) has three main subunits: a(1), b(2) and c(10-14). The alpha and beta chains form an alternating ring which encloses part of the gamma chain. F(1) is attached to F(0) by a central stalk formed by the gamma and epsilon chains, while a peripheral stalk is formed by the delta and b chains.

Its subcellular location is the cell inner membrane. F(1)F(0) ATP synthase produces ATP from ADP in the presence of a proton or sodium gradient. F-type ATPases consist of two structural domains, F(1) containing the extramembraneous catalytic core and F(0) containing the membrane proton channel, linked together by a central stalk and a peripheral stalk. During catalysis, ATP synthesis in the catalytic domain of F(1) is coupled via a rotary mechanism of the central stalk subunits to proton translocation. In terms of biological role, this protein is part of the stalk that links CF(0) to CF(1). It either transmits conformational changes from CF(0) to CF(1) or is implicated in proton conduction. The polypeptide is ATP synthase subunit delta (Burkholderia mallei (strain SAVP1)).